We begin with the raw amino-acid sequence, 220 residues long: uncharacterized protein (220 aa).

A helical membrane pass occupies residues 20-42 (FFKKLVPIIIIISIVVITIMVII).

Its subcellular location is the membrane. This is an uncharacterized protein from Rickettsia prowazekii (strain Madrid E).